A 200-amino-acid chain; its full sequence is Potassium-transporting ATPase KdpC subunit (200 aa).

The helical transmembrane segment at 6-26 threads the bilayer; sequence PALVLLILLTLITGIAYPLLT.

Belongs to the KdpC family. The system is composed of three essential subunits: KdpA, KdpB and KdpC.

It is found in the cell inner membrane. In terms of biological role, part of the high-affinity ATP-driven potassium transport (or Kdp) system, which catalyzes the hydrolysis of ATP coupled with the electrogenic transport of potassium into the cytoplasm. This subunit acts as a catalytic chaperone that increases the ATP-binding affinity of the ATP-hydrolyzing subunit KdpB by the formation of a transient KdpB/KdpC/ATP ternary complex. The sequence is that of Potassium-transporting ATPase KdpC subunit from Yersinia pseudotuberculosis serotype O:1b (strain IP 31758).